Consider the following 784-residue polypeptide: Protein DBF4 homolog B (784 aa).

Residues 27–117 (CREITFAGKS…SRGKQLLKKV (91 aa)) enclose the BRCT domain. The interval 222–243 (TVKKKDPGDQEEEEGQRSQKPQ) is disordered. The DBF4-type zinc-finger motif lies at 244 to 293 (ARKRKGYCECCEETFDTLSEHLVGEHHFRFVSNPLSYKMIDDLAAQLTCD). Positions 251, 254, 264, and 270 each coordinate Zn(2+). Disordered stretches follow at residues 299 to 332 (FGSPTSPEAERSSQNEDWDLDLAPGEAEPAGNEG), 348 to 368 (HADCEDQGAPAYLRDGGAEEP), and 495 to 529 (TVGSQGDVTSHSAANKPHTENCPVDSTGDRHAQPA). The span at 498–507 (SQGDVTSHSA) shows a compositional bias: polar residues.

As to quaternary structure, forms a complex with cdc7. Phosphorylated. Stably phosphorylated throughout the cell cycle.

Its subcellular location is the nucleus. Functionally, regulatory subunit for cdc7 which activates its kinase activity thereby playing a central role in DNA replication and cell proliferation. Specifically required during the initiation of DNA replication in egg and during early embryonic development. The complex cdc7-dbf4b phosphorylates mcm2 and mcm4 subunits and is required for cdc45 loading. In Xenopus laevis (African clawed frog), this protein is Protein DBF4 homolog B (dbf4b).